The sequence spans 89 residues: Cell division topological specificity factor (89 aa).

Belongs to the MinE family.

In terms of biological role, prevents the cell division inhibition by proteins MinC and MinD at internal division sites while permitting inhibition at polar sites. This ensures cell division at the proper site by restricting the formation of a division septum at the midpoint of the long axis of the cell. In Janthinobacterium sp. (strain Marseille) (Minibacterium massiliensis), this protein is Cell division topological specificity factor.